A 181-amino-acid polypeptide reads, in one-letter code: GTP cyclohydrolase 1 2 (181 aa).

This sequence belongs to the GTP cyclohydrolase I family. In terms of assembly, homomer.

The enzyme catalyses GTP + H2O = 7,8-dihydroneopterin 3'-triphosphate + formate + H(+). It functions in the pathway cofactor biosynthesis; 7,8-dihydroneopterin triphosphate biosynthesis; 7,8-dihydroneopterin triphosphate from GTP: step 1/1. The chain is GTP cyclohydrolase 1 2 from Pseudomonas syringae pv. tomato (strain ATCC BAA-871 / DC3000).